A 92-amino-acid polypeptide reads, in one-letter code: Small ribosomal subunit protein bS20 (92 aa).

The interval 1 to 22 (MANSPQSKKRARQAEARAAVNK) is disordered.

The protein belongs to the bacterial ribosomal protein bS20 family.

Functionally, binds directly to 16S ribosomal RNA. The polypeptide is Small ribosomal subunit protein bS20 (Cereibacter sphaeroides (strain ATCC 17029 / ATH 2.4.9) (Rhodobacter sphaeroides)).